The chain runs to 221 residues: CASP-like protein 4C1 (221 aa).

The tract at residues 1–21 (MDSPESSDRGLNPMTPDHGGH) is disordered. Topologically, residues 1–54 (MDSPESSDRGLNPMTPDHGGHNGKVVHYFGQGVEGGPASPRKLGHGHLHPKANT) are cytoplasmic. A helical membrane pass occupies residues 55 to 75 (ALLLLRLLTFAFSLASLVIMA). The Extracellular segment spans residues 76-101 (TNSATTTATAGRHRTVNWVDFDTYRY). A helical membrane pass occupies residues 102-122 (VLAACAIVCLYSFAEIGLGLW). Residues 123–144 (YLLKGRMVMPESMAHWFDFGHD) are Cytoplasmic-facing. The helical transmembrane segment at 145–165 (QGFAYLIFSACSGATAVAHNL) threads the bilayer. The Extracellular portion of the chain corresponds to 166–189 (RERHILIHGMYGCDEANSFCMKAE). A helical transmembrane segment spans residues 190-210 (ISIGLAFGAFLFIALSSLLSG). At 211 to 221 (YRLVKWLILGP) the chain is on the cytoplasmic side.

It belongs to the Casparian strip membrane proteins (CASP) family. In terms of assembly, homodimer and heterodimers.

It localises to the cell membrane. This is CASP-like protein 4C1 from Pteridium aquilinum subsp. aquilinum (Bracken fern).